The following is a 412-amino-acid chain: Protein arginine N-methyltransferase 2 (412 aa).

Residues 48 to 65 (EKNRNGDKEFRESTDDNK) are compositionally biased toward basic and acidic residues. Disordered regions lie at residues 48 to 69 (EKNR…TSNT) and 169 to 189 (SVQT…DDAT). A phosphoserine mark is found at S181 and S184. Residues 189 to 412 (TAANQQVYLK…YYYHPRITFA (224 aa)) enclose the RMT2 domain. S-adenosyl-L-methionine is bound by residues Y196, M226, 250-255 (FGMGII), 271-273 (EAH), 298-299 (WQ), and D319.

It belongs to the class I-like SAM-binding methyltransferase superfamily. RMT2 methyltransferase family. Monomer. Interacts with nucleoporins NUP49, NUP57 and NUP100.

It is found in the cytoplasm. The protein resides in the nucleus. S-adenosyl-L-methionine-dependent protein-arginine N-methyltransferase that methylates the delta-nitrogen atom of arginine residues to form N5-methylarginine (type IV) in target proteins. Monomethylates ribosomal protein L12 (RPL12A/RPL12B) at 'Arg-67'. The protein is Protein arginine N-methyltransferase 2 of Saccharomyces cerevisiae (strain ATCC 204508 / S288c) (Baker's yeast).